The sequence spans 532 residues: P granule abnormality protein 2 (532 aa).

In terms of assembly, interacts with pgl-1 and pgl-3; association with either pgl-1 or pgl-3 is not required for P-granule localization. Highly expressed in the germline.

It is found in the cytoplasmic granule. In terms of biological role, transient component of P-granule which is involved in germline development. The polypeptide is P granule abnormality protein 2 (Caenorhabditis elegans).